Here is a 585-residue protein sequence, read N- to C-terminus: Probable inactive serine/threonine-protein kinase slob1 (585 aa).

The FYVE-type zinc-finger motif lies at 21–82 (DQSSLECNDC…LCRSCNNSFE (62 aa)). The Zn(2+) site is built by C27, C30, C43, C46, C51, C54, C74, and C77. The 371-residue stretch at 108 to 478 (SKPLQDIGHT…STSLLNNSFN (371 aa)) folds into the Protein kinase domain. 2 stretches are compositionally biased toward low complexity: residues 426 to 456 (ISKLSSSSSNNNSNNNNNNNNNSNTFNNISS) and 466 to 503 (LPSSTSLLNNSFNLSNNNNPSSPSTSTISPNSSLISSP). Residues 426 to 585 (ISKLSSSSSN…SLKPSSTKKK (160 aa)) form a disordered region. Residues 513 to 532 (TPPPPPPPPKSAPPPPPPPS) are compositionally biased toward pro residues. Over residues 533 to 542 (SSKLPPSSSS) the composition is skewed to low complexity. Residues 542–562 (SRNSLLESIRNADNAKKLKKT) enclose the WH2 domain.

The protein belongs to the protein kinase superfamily. Ser/Thr protein kinase family.

This is Probable inactive serine/threonine-protein kinase slob1 (slob1) from Dictyostelium discoideum (Social amoeba).